Consider the following 430-residue polypeptide: Ribosomal protein uS12 methylthiotransferase RimO (430 aa).

The MTTase N-terminal domain maps to 2–118 (AKIFTISLGC…IDNVIKRPKH (117 aa)). C11, C47, C81, C150, C154, and C157 together coordinate [4Fe-4S] cluster. The Radical SAM core domain occupies 136-368 (LTAPHSAYLK…AQSRVIDSIN (233 aa)). The region spanning 369-430 (RKLKGKTVKV…KGYNRTGKII (62 aa)) is the TRAM domain.

Belongs to the methylthiotransferase family. RimO subfamily. It depends on [4Fe-4S] cluster as a cofactor.

Its subcellular location is the cytoplasm. The enzyme catalyses L-aspartate(89)-[ribosomal protein uS12]-hydrogen + (sulfur carrier)-SH + AH2 + 2 S-adenosyl-L-methionine = 3-methylsulfanyl-L-aspartate(89)-[ribosomal protein uS12]-hydrogen + (sulfur carrier)-H + 5'-deoxyadenosine + L-methionine + A + S-adenosyl-L-homocysteine + 2 H(+). In terms of biological role, catalyzes the methylthiolation of an aspartic acid residue of ribosomal protein uS12. The polypeptide is Ribosomal protein uS12 methylthiotransferase RimO (Elusimicrobium minutum (strain Pei191)).